The sequence spans 147 residues: MKIIIQRVNQASVSIEDDVVGSIEKGLVLLVGIAPEDTTEDIAYAVRKITSMRIFSDDEGKMNLSIQDIKGSVLSISQFTLFADTKKGNRPAFTGAADPVKANQFYDIFNQELANHVSVETGQFGADMQVSLINDGPVTIVLDTKNK.

Residues 136 to 137 (GP) carry the Gly-cisPro motif, important for rejection of L-amino acids motif.

Belongs to the DTD family. In terms of assembly, homodimer.

It is found in the cytoplasm. It carries out the reaction glycyl-tRNA(Ala) + H2O = tRNA(Ala) + glycine + H(+). The catalysed reaction is a D-aminoacyl-tRNA + H2O = a tRNA + a D-alpha-amino acid + H(+). In terms of biological role, an aminoacyl-tRNA editing enzyme that deacylates mischarged D-aminoacyl-tRNAs. Also deacylates mischarged glycyl-tRNA(Ala), protecting cells against glycine mischarging by AlaRS. Acts via tRNA-based rather than protein-based catalysis; rejects L-amino acids rather than detecting D-amino acids in the active site. By recycling D-aminoacyl-tRNA to D-amino acids and free tRNA molecules, this enzyme counteracts the toxicity associated with the formation of D-aminoacyl-tRNA entities in vivo and helps enforce protein L-homochirality. This chain is D-aminoacyl-tRNA deacylase, found in Streptococcus agalactiae serotype III (strain NEM316).